We begin with the raw amino-acid sequence, 479 residues long: D-aminoacyl-tRNA deacylase (479 aa).

This sequence belongs to the DtdA deacylase family. Monomer. Zn(2+) is required as a cofactor.

The enzyme catalyses a D-aminoacyl-tRNA + H2O = a tRNA + a D-alpha-amino acid + H(+). It carries out the reaction glycyl-tRNA(Ala) + H2O = tRNA(Ala) + glycine + H(+). In terms of biological role, D-aminoacyl-tRNA deacylase with broad substrate specificity. By recycling D-aminoacyl-tRNA to D-amino acids and free tRNA molecules, this enzyme counteracts the toxicity associated with the formation of D-aminoacyl-tRNA entities in vivo. The protein is D-aminoacyl-tRNA deacylase of Methanococcoides burtonii (strain DSM 6242 / NBRC 107633 / OCM 468 / ACE-M).